The sequence spans 161 residues: ATP synthase subunit b' (161 aa).

Residues 30–47 (VMAIQFLVLAALLNKLFY) form a helical membrane-spanning segment.

This sequence belongs to the ATPase B chain family. In terms of assembly, F-type ATPases have 2 components, F(1) - the catalytic core - and F(0) - the membrane proton channel. F(1) has five subunits: alpha(3), beta(3), gamma(1), delta(1), epsilon(1). F(0) has four main subunits: a(1), b(1), b'(1) and c(10-14). The alpha and beta chains form an alternating ring which encloses part of the gamma chain. F(1) is attached to F(0) by a central stalk formed by the gamma and epsilon chains, while a peripheral stalk is formed by the delta, b and b' chains.

It localises to the cellular thylakoid membrane. In terms of biological role, f(1)F(0) ATP synthase produces ATP from ADP in the presence of a proton or sodium gradient. F-type ATPases consist of two structural domains, F(1) containing the extramembraneous catalytic core and F(0) containing the membrane proton channel, linked together by a central stalk and a peripheral stalk. During catalysis, ATP synthesis in the catalytic domain of F(1) is coupled via a rotary mechanism of the central stalk subunits to proton translocation. Its function is as follows. Component of the F(0) channel, it forms part of the peripheral stalk, linking F(1) to F(0). The b'-subunit is a diverged and duplicated form of b found in plants and photosynthetic bacteria. In Picosynechococcus sp. (strain ATCC 27264 / PCC 7002 / PR-6) (Agmenellum quadruplicatum), this protein is ATP synthase subunit b'.